Here is a 362-residue protein sequence, read N- to C-terminus: Uroporphyrinogen decarboxylase (362 aa).

Residues 39–43 (RQAGR), Asp-88, Tyr-165, Thr-220, and His-334 contribute to the substrate site.

It belongs to the uroporphyrinogen decarboxylase family. Homodimer.

Its subcellular location is the cytoplasm. The catalysed reaction is uroporphyrinogen III + 4 H(+) = coproporphyrinogen III + 4 CO2. It participates in porphyrin-containing compound metabolism; protoporphyrin-IX biosynthesis; coproporphyrinogen-III from 5-aminolevulinate: step 4/4. Functionally, catalyzes the decarboxylation of four acetate groups of uroporphyrinogen-III to yield coproporphyrinogen-III. This Synechococcus sp. (strain JA-3-3Ab) (Cyanobacteria bacterium Yellowstone A-Prime) protein is Uroporphyrinogen decarboxylase.